Consider the following 103-residue polypeptide: Iron-sulfur cluster assembly protein CyaY (103 aa).

This sequence belongs to the frataxin family.

Its function is as follows. Involved in iron-sulfur (Fe-S) cluster assembly. May act as a regulator of Fe-S biogenesis. The chain is Iron-sulfur cluster assembly protein CyaY from Rickettsia africae (strain ESF-5).